A 227-amino-acid polypeptide reads, in one-letter code: Cytochrome c oxidase subunit 2 (227 aa).

Residues 1–14 (MAYPFELGFQDATS) are Mitochondrial intermembrane-facing. The chain crosses the membrane as a helical span at residues 15–45 (PIMEELLHFHDHTLMIVFLISSLVLYIISLM). Residues 46-59 (LTTKLTHTSTMDAQ) are Mitochondrial matrix-facing. The helical transmembrane segment at 60-87 (EVETIWTILPAIILILIALPSLRILYMM) threads the bilayer. Residues 88-227 (DEINDPSLTV…HFENWSSSML (140 aa)) are Mitochondrial intermembrane-facing. Positions 161, 196, 198, 200, 204, and 207 each coordinate Cu cation. Mg(2+) is bound at residue glutamate 198.

Belongs to the cytochrome c oxidase subunit 2 family. As to quaternary structure, component of the cytochrome c oxidase (complex IV, CIV), a multisubunit enzyme composed of 14 subunits. The complex is composed of a catalytic core of 3 subunits MT-CO1, MT-CO2 and MT-CO3, encoded in the mitochondrial DNA, and 11 supernumerary subunits COX4I, COX5A, COX5B, COX6A, COX6B, COX6C, COX7A, COX7B, COX7C, COX8 and NDUFA4, which are encoded in the nuclear genome. The complex exists as a monomer or a dimer and forms supercomplexes (SCs) in the inner mitochondrial membrane with NADH-ubiquinone oxidoreductase (complex I, CI) and ubiquinol-cytochrome c oxidoreductase (cytochrome b-c1 complex, complex III, CIII), resulting in different assemblies (supercomplex SCI(1)III(2)IV(1) and megacomplex MCI(2)III(2)IV(2)). Found in a complex with TMEM177, COA6, COX18, COX20, SCO1 and SCO2. Interacts with TMEM177 in a COX20-dependent manner. Interacts with COX20. Interacts with COX16. Requires Cu cation as cofactor.

Its subcellular location is the mitochondrion inner membrane. It catalyses the reaction 4 Fe(II)-[cytochrome c] + O2 + 8 H(+)(in) = 4 Fe(III)-[cytochrome c] + 2 H2O + 4 H(+)(out). Functionally, component of the cytochrome c oxidase, the last enzyme in the mitochondrial electron transport chain which drives oxidative phosphorylation. The respiratory chain contains 3 multisubunit complexes succinate dehydrogenase (complex II, CII), ubiquinol-cytochrome c oxidoreductase (cytochrome b-c1 complex, complex III, CIII) and cytochrome c oxidase (complex IV, CIV), that cooperate to transfer electrons derived from NADH and succinate to molecular oxygen, creating an electrochemical gradient over the inner membrane that drives transmembrane transport and the ATP synthase. Cytochrome c oxidase is the component of the respiratory chain that catalyzes the reduction of oxygen to water. Electrons originating from reduced cytochrome c in the intermembrane space (IMS) are transferred via the dinuclear copper A center (CU(A)) of subunit 2 and heme A of subunit 1 to the active site in subunit 1, a binuclear center (BNC) formed by heme A3 and copper B (CU(B)). The BNC reduces molecular oxygen to 2 water molecules using 4 electrons from cytochrome c in the IMS and 4 protons from the mitochondrial matrix. This Tamias merriami (Merriam's chipmunk) protein is Cytochrome c oxidase subunit 2 (MT-CO2).